We begin with the raw amino-acid sequence, 302 residues long: N-acetyl-D-glucosamine kinase (302 aa).

ATP contacts are provided by residues 4–11 and 133–140; these read GFDVGGTK and GFGGGLVY. Residues His157, Cys177, Cys179, and Cys184 each contribute to the Zn(2+) site.

Belongs to the ROK (NagC/XylR) family. NagK subfamily.

The catalysed reaction is N-acetyl-D-glucosamine + ATP = N-acetyl-D-glucosamine 6-phosphate + ADP + H(+). The protein operates within cell wall biogenesis; peptidoglycan recycling. Functionally, catalyzes the phosphorylation of N-acetyl-D-glucosamine (GlcNAc) derived from cell-wall degradation, yielding GlcNAc-6-P. This chain is N-acetyl-D-glucosamine kinase, found in Vibrio cholerae serotype O1 (strain ATCC 39315 / El Tor Inaba N16961).